The primary structure comprises 1960 residues: [F-actin]-monooxygenase MICAL3 (1960 aa).

The monooxygenase domain stretch occupies residues 2-494 (EESKNEATNR…RHLYDTGDTK (493 aa)). FAD contacts are provided by residues cysteine 97, 116 to 118 (EKR), 123 to 125 (RNN), phenylalanine 183, tyrosine 298, and aspartate 398. One can recognise a Calponin-homology (CH) domain in the interval 518 to 624 (VARSSKLLGW…YLTQFYEMFK (107 aa)). The residue at position 649 (serine 649) is a Phosphoserine. The segment at 658 to 704 (GQTISRKRSPKDKKEKDLDGAGKRRKTSQSEEEDTPRGHRGARPTLV) is disordered. Basic and acidic residues predominate over residues 669–679 (DKKEKDLDGAG). Phosphoserine occurs at positions 685 and 687. An LIM zinc-binding domain is found at 762–824 (DTCYFCQKRV…KPHYCYRLSG (63 aa)). Positions 764, 767, 785, 788, 791, 794, 814, and 817 each coordinate Zn(2+). Disordered stretches follow at residues 826-887 (AQRK…LRGT) and 906-1295 (LEEV…EALK). A Phosphothreonine modification is found at threonine 887. Serine 971 carries the phosphoserine modification. The span at 984–1014 (GEEEEEDEEDEEEEEEEEDEEDEEEDEDESS) shows a compositional bias: acidic residues. 2 stretches are compositionally biased toward basic and acidic residues: residues 1039–1051 (HWTH…EERA) and 1072–1084 (DVDS…KGEA). A phosphoserine mark is found at serine 1129, serine 1139, serine 1156, and serine 1188. Composition is skewed to pro residues over residues 1192-1203 (SPLPEPSTPPAE) and 1217-1233 (RTPP…PPTQ). Position 1250 is a phosphoserine (serine 1250). Threonine 1252 carries the phosphothreonine modification. 3 positions are modified to phosphoserine: serine 1254, serine 1286, and serine 1313. Polar residues predominate over residues 1277–1286 (QGVTKDTLGS). Disordered stretches follow at residues 1316–1550 (LTPV…KRGL) and 1564–1782 (RMRA…EEEL). Phosphothreonine is present on threonine 1317. The segment covering 1379–1393 (PDREPKGPREEHRDL) has biased composition (basic and acidic residues). Positions 1394-1406 (SSSSGLGLQGSSS) are enriched in low complexity. Serine 1404 carries the post-translational modification Phosphoserine. Over residues 1407–1425 (RTRTPGSQSFNTSDSTMLT) the composition is skewed to polar residues. Residue threonine 1425 is modified to Phosphothreonine. The segment covering 1485–1503 (SVDEIPFADDVEDTYDDNT) has biased composition (acidic residues). The span at 1594 to 1611 (AAAAPRTPRTPAPRRATA) shows a compositional bias: low complexity. Residues 1616 to 1627 (GPEEPAPRHEAT) are compositionally biased toward basic and acidic residues. Over residues 1633–1653 (SPPSDSGGPDGSVTSSEGSSG) the composition is skewed to low complexity. Over residues 1654-1672 (KSKKRSSLFSPRRSKKEKK) the composition is skewed to basic residues. Residues serine 1660 and serine 1663 each carry the phosphoserine modification. Positions 1718–1727 (CPSTPSSGTT) are enriched in polar residues. The span at 1762–1778 (VLERTSQKSRKEPRTYT) shows a compositional bias: basic and acidic residues. The stretch at 1779–1952 (EEELNAKLTR…DKDLEAAMLS (174 aa)) forms a coiled coil. The bMERB domain maps to 1799 to 1948 (KQEELKRLHR…EKEEDKDLEA (150 aa)). Serine 1870 is subject to Phosphoserine.

Belongs to the Mical family. As to quaternary structure, interacts with RAB1B, RAB8A, RAB10, RAB13 and RAB15 (in their GTP-bound forms); binding to RAB1B is of low affinity compared to other Rab proteins; at least in case of RAB8A can bind 2 molecules of RAB8A simultaneously through a high and a low affinity binding site, respectively. Interacts with ERC1 and RAB8A; may bridge ERC1 with RAB8A. Interacts with KIF23 and ERC1; enhances the interaction between KIF23 and ERC1. Interacts with NINL. FAD is required as a cofactor.

It is found in the cytoplasm. It localises to the cell cortex. Its subcellular location is the cytoskeleton. The protein resides in the nucleus. The protein localises to the midbody. It is found in the spindle. It localises to the cilium basal body. The catalysed reaction is L-methionyl-[F-actin] + NADPH + O2 + H(+) = L-methionyl-(R)-S-oxide-[F-actin] + NADP(+) + H2O. Functionally, monooxygenase that promotes depolymerization of F-actin by mediating oxidation of specific methionine residues on actin to form methionine-sulfoxide, resulting in actin filament disassembly and preventing repolymerization. In the absence of actin, it also functions as a NADPH oxidase producing H(2)O(2). Seems to act as Rab effector protein and play a role in vesicle trafficking. Involved in exocytic vesicles tethering and fusion: the monooxygenase activity is required for this process and implicates RAB8A associated with exocytotic vesicles. Required for cytokinesis. Contributes to stabilization and/or maturation of the intercellular bridge independently of its monooxygenase activity. Promotes recruitment of Rab8 and ERC1 to the intercellular bridge, and together these proteins are proposed to function in timely abscission. The polypeptide is [F-actin]-monooxygenase MICAL3 (MICAL3) (Bos taurus (Bovine)).